Consider the following 319-residue polypeptide: Putative replication factor C small subunit R395 (319 aa).

45 to 52 (GSPGVGKT) is an ATP binding site.

The protein belongs to the activator 1 small subunits family. RfcS subfamily.

Part of the RFC clamp loader complex which loads the PCNA sliding clamp onto DNA. The protein is Putative replication factor C small subunit R395 of Acanthamoeba polyphaga mimivirus (APMV).